The following is a 572-amino-acid chain: MADFEELRNMVSSFRVSELQVLLGFAGRNKSGRKHDLLMRALHLLKSGCTPAVQIKIRELYRRRYPRTLEGLSDLSTIKSSVFSLDGSSSPVEPDLAVAGIHSLPSTSIAPHSPSSPVASVLLQDTKPTFEMQQPSPPIPPVHPDVQLKTLPFYDVLDVLIKPTSLVQSSIQRFQEKFFIFALTPQQVREICISRDFLPGGRRDYTVQVQLRLCLAETSCPQEDNYPNSLCIKVNGKLFPLPGYAPPPKNGIEQKRPGRPLNITSLVRLSSAVPNQISISWASEIGKNYSMSVYLVRQLTSAMLLQRLKMKGIRNPDHSRALIKEKLTADPDSEIATTSLRVSLMCPLGKMRLTIPCRAVTCTHLQCFDAALYLQMNEKKPTWICPVCDKKAAYESLILDGLFMEILNDCSDVDEIKFQEDGSWCPMRPKKEAMKVTSQPCTKVESSSVFSKPCSVTVASDASKKKIDVIDLTIESSSDEEEDPPAKRKCIFMSETQSSPTKGVLMYQPSSVRVPSVTSVDPAAIPPSLTDYSVPFHHTPVSSMSSDLPGEQRRNDINNEVQLGTSSDTVQQ.

The SAP domain occupies 11 to 45 (VSSFRVSELQVLLGFAGRNKSGRKHDLLMRALHLL). The LXXLL motif signature appears at 19–23 (LQVLL). Glycyl lysine isopeptide (Lys-Gly) (interchain with G-Cter in SUMO2) cross-links involve residues Lys-46 and Lys-249. The region spanning 134–299 (QPSPPIPPVH…SMSVYLVRQL (166 aa)) is the PINIT domain. The SP-RING-type zinc finger occupies 331-412 (PDSEIATTSL…FMEILNDCSD (82 aa)). The Zn(2+) site is built by Cys-362, His-364, Cys-385, and Cys-388. Residues Lys-430, Lys-435, Lys-443, and Lys-452 each participate in a glycyl lysine isopeptide (Lys-Gly) (interchain with G-Cter in SUMO2) cross-link. Residues 467–473 (IDVIDLT) are SUMO1-binding. 3 positions are modified to phosphoserine: Ser-476, Ser-477, and Ser-478. The Nuclear localization signal motif lies at 484–492 (PPAKRKCIF). Lys-489 participates in a covalent cross-link: Glycyl lysine isopeptide (Lys-Gly) (interchain with G-Cter in SUMO2). At Ser-499 the chain carries Phosphoserine. Residue Lys-502 forms a Glycyl lysine isopeptide (Lys-Gly) (interchain with G-Cter in SUMO2) linkage. A disordered region spans residues 523–572 (AAIPPSLTDYSVPFHHTPVSSMSSDLPGEQRRNDINNEVQLGTSSDTVQQ). The span at 558-572 (NNEVQLGTSSDTVQQ) shows a compositional bias: polar residues.

This sequence belongs to the PIAS family. In terms of assembly, binds SUMO1 and UBE2I. Interacts with AXIN1, JUN, MDM2, PARK7, TP53 and TP73 isoform alpha, but not TP73 isoform beta. Interacts with STAT4 following IL12 and IFN-alpha stimulation of T-cells. Interacts also with GTF2I, GTF2IRD1, IKFZ1, DAB2 and MSX2, as well as with several steroid receptors, including ESR1, ESR2, NR3C1, PGR, AR, and with NCOA2. Sumoylation of a target protein seems to enhance the interaction. Binds to sumoylated ELK1. Binds DNA, such as CDKN1A promoter, in a sequence-specific manner. Interacts with PLAG1. Interacts with KLF8; the interaction results in SUMO ligation and repression of KLF8 transcriptional activity and of its cell cycle progression into G(1) phase. Interacts with IFIH1/MDA5. Interacts with PML. Interacts with PRDM1. In terms of processing, sumoylated. Mainly expressed in testis.

It localises to the nucleus speckle. It is found in the nucleus. Its subcellular location is the PML body. The protein operates within protein modification; protein sumoylation. In terms of biological role, functions as an E3-type small ubiquitin-like modifier (SUMO) ligase, stabilizing the interaction between UBE2I and the substrate, and as a SUMO-tethering factor. Plays a crucial role as a transcriptional coregulation in various cellular pathways, including the STAT pathway, the p53 pathway and the steroid hormone signaling pathway. The effects of this transcriptional coregulation, transactivation or silencing may vary depending upon the biological context and PIAS2 isoform studied. However, it seems to be mostly involved in gene silencing. Binds to sumoylated ELK1 and enhances its transcriptional activity by preventing recruitment of HDAC2 by ELK1, thus reversing SUMO-mediated repression of ELK1 transactivation activity. Sumoylates PML at'Lys-65' and 'Lys-160'. The chain is E3 SUMO-protein ligase PIAS2 (Pias2) from Rattus norvegicus (Rat).